Reading from the N-terminus, the 204-residue chain is Large ribosomal subunit protein uL10 (204 aa).

The disordered stretch occupies residues 170–204 (AADPSVIGGAGEASDQEPKTTETPEASAAQDNTNE). Residues 192 to 204 (TPEASAAQDNTNE) are compositionally biased toward polar residues.

It belongs to the universal ribosomal protein uL10 family. In terms of assembly, part of the ribosomal stalk of the 50S ribosomal subunit. The N-terminus interacts with L11 and the large rRNA to form the base of the stalk. The C-terminus forms an elongated spine to which L12 dimers bind in a sequential fashion forming a multimeric L10(L12)X complex.

Forms part of the ribosomal stalk, playing a central role in the interaction of the ribosome with GTP-bound translation factors. This Cutibacterium acnes (strain DSM 16379 / KPA171202) (Propionibacterium acnes) protein is Large ribosomal subunit protein uL10.